The sequence spans 482 residues: uncharacterized protein (482 aa).

2 stretches are compositionally biased toward low complexity: residues 24 to 86 (SPNS…AQQQ) and 312 to 339 (TDSLCSSSTSTPSFNSTSSSSKNQSQSI). Disordered regions lie at residues 24–88 (SPNS…QQHY) and 307–376 (LHSQ…LIGK). The segment covering 342–363 (EEEEDGGEDEEEEGGEDNDNES) has biased composition (acidic residues).

This is an uncharacterized protein from Dictyostelium discoideum (Social amoeba).